Reading from the N-terminus, the 1084-residue chain is MSSNSFAYNEQSGGGEATELGQEATSTISPSGAFGLFSSDMKKNEDLKQMLESNKDSAKLDAMKRIVGMIAKGKNASELFPAVVKNVASKNIEIKKLVYVYLVRYAEEQQDLALLSISTFQRALKDPNQLIRASALRVLSSIRVPIIVPIMMLAIKEASADLSPYVRKNAAHAIQKLYSLDPEQKEMLIEIIEKLLKDKSTLVAGSVVMAFEEVCPDRIDLIHKNYRKLCNLLVDVEEWGQVVIIHMLTRYARTQFVSPWRQGDVLEDNEKDFYDSDEEQKEKADKRKRPYAMDPDHRLLIRNTKPLLQSRNAAVVMAVAQLYWHIAPKSEAGIISKSLVRLLRSSREVQYIVLQNIATMSIQRKGMFEPYLKSFYVRSTDATMIKILKLEILTNLANEANISTLLREFQTYVKSQDKQFAAATIQTIGRCATSITEVSDTCLNGLVCLLSNRDEIVVAESVVVIKKLLQMQPMQHGEIIKHMAKLLDSITVPVARASILWLIGENCERVPKIAPDVLRKTAKSFTSEDDLVKLQILNLGAKLYLTNSKQTKLLTQYILNLGKYDQNYDIRDRTRFIRQLIVPNEKSGALSKYAKKIFLAQKPAPLLESPFKDRDHFQLGTLSHTLNTKATGYLELSNWPEVAPDPSVRNVEVIELAKEWTPAGKAKKENPDKKFYSESEEEEDSSESSSDSESESGSESGEDEEDDRSGDSAEDSGESGSEPEAGKGRAATRSRARGRGDSKDVDKEKENSKTSESSSGESSSIEESSSDSESESESESESESRKVTKEKEKKTKQERNPLTKDVSLLDLDDFNLVSTPVALPTPALSPSLIADLEGLNLSATSSVISVSTPVFVPGKTHVLLHRMSGKGLAAHYFFPRQPCIFGDKMVSVQITLNNTTDQKIENIHVGGKKLPMGMQMHVFNPIESLEPAGSITVSMGIDFCDSTQTASFQLCTKDDCFSVNIQPPVGELLLPVAMSEKDFKKEQGMLSGMNETSTTIIAAPQNFASSVILQKIVNVANVGVVPSGQDNIHRFAAKTVHSGSLMLVTVELKEGSTAQLIINTEKTVIGSVLLRELKPVLSQG.

Residues 1–11 (MSSNSFAYNEQ) are compositionally biased toward polar residues. Positions 1-26 (MSSNSFAYNEQSGGGEATELGQEATS) are disordered. Phosphoserine is present on residues Ser276 and Ser609. The segment at 663–800 (AGKAKKENPD…KEKKTKQERN (138 aa)) is disordered. Basic and acidic residues predominate over residues 666-677 (AKKENPDKKFYS). Positions 678–717 (ESEEEEDSSESSSDSESESGSESGEDEEDDRSGDSAEDSG) are enriched in acidic residues. A compositionally biased stretch (low complexity) spans 718 to 729 (ESGSEPEAGKGR). Residues 738 to 753 (GRGDSKDVDKEKENSK) show a composition bias toward basic and acidic residues. Residue Ser742 is modified to Phosphoserine. Residues 754–767 (TSESSSGESSSIEE) show a composition bias toward low complexity. Over residues 768–781 (SSSDSESESESESE) the composition is skewed to acidic residues. Residues 782 to 800 (SESRKVTKEKEKKTKQERN) are compositionally biased toward basic and acidic residues.

This sequence belongs to the adaptor complexes large subunit family. Adaptor protein complex 3 (AP-3) is a heterotetramer composed of two large adaptins (delta-type subunit AP3D1 and beta-type subunit AP3B1 or AP3B2), a medium adaptin (mu-type subunit AP3M1 or AP3M2) and a small adaptin (sigma-type subunit APS1 or AP3S2). AP-3 associates with the BLOC-1 complex. Interacts with KIF3A; interaction is direct; interaction is impaired by pyrophosphorylation of AP3B1. In terms of processing, phosphorylated on serine residues. Post-translationally, pyrophosphorylation by 5-diphosphoinositol pentakisphosphate (5-IP7) impairs interaction with KIF3A. Serine pyrophosphorylation is achieved by Mg(2+)-dependent, but enzyme independent transfer of a beta-phosphate from a inositol pyrophosphate to a pre-phosphorylated serine residue.

The protein localises to the cytoplasmic vesicle. It is found in the clathrin-coated vesicle membrane. The protein resides in the golgi apparatus. In terms of biological role, subunit of non-clathrin- and clathrin-associated adaptor protein complex 3 (AP-3) that plays a role in protein sorting in the late-Golgi/trans-Golgi network (TGN) and/or endosomes. The AP complexes mediate both the recruitment of clathrin to membranes and the recognition of sorting signals within the cytosolic tails of transmembrane cargo molecules. AP-3 appears to be involved in the sorting of a subset of transmembrane proteins targeted to lysosomes and lysosome-related organelles. In concert with the BLOC-1 complex, AP-3 is required to target cargos into vesicles assembled at cell bodies for delivery into neurites and nerve terminals. The protein is AP-3 complex subunit beta-1 (AP3B1) of Bos taurus (Bovine).